The sequence spans 192 residues: Protein GrpE (192 aa).

The tract at residues Met1–Glu43 is disordered.

This sequence belongs to the GrpE family. As to quaternary structure, homodimer.

Its subcellular location is the cytoplasm. Its function is as follows. Participates actively in the response to hyperosmotic and heat shock by preventing the aggregation of stress-denatured proteins, in association with DnaK and GrpE. It is the nucleotide exchange factor for DnaK and may function as a thermosensor. Unfolded proteins bind initially to DnaJ; upon interaction with the DnaJ-bound protein, DnaK hydrolyzes its bound ATP, resulting in the formation of a stable complex. GrpE releases ADP from DnaK; ATP binding to DnaK triggers the release of the substrate protein, thus completing the reaction cycle. Several rounds of ATP-dependent interactions between DnaJ, DnaK and GrpE are required for fully efficient folding. This is Protein GrpE from Lactobacillus gasseri (strain ATCC 33323 / DSM 20243 / BCRC 14619 / CIP 102991 / JCM 1131 / KCTC 3163 / NCIMB 11718 / NCTC 13722 / AM63).